A 252-amino-acid chain; its full sequence is Exodeoxyribonuclease (252 aa).

Residue E36 participates in Mg(2+) binding. Y106 is a catalytic residue. D145, N147, and D242 together coordinate Mg(2+). D145 functions as the Proton donor/acceptor in the catalytic mechanism.

It belongs to the DNA repair enzymes AP/ExoA family. It depends on Mg(2+) as a cofactor. Mn(2+) serves as cofactor.

The protein resides in the cytoplasm. It carries out the reaction Exonucleolytic cleavage in the 3'- to 5'-direction to yield nucleoside 5'-phosphates.. The chain is Exodeoxyribonuclease (exoA) from Bacillus subtilis (strain 168).